Reading from the N-terminus, the 122-residue chain is Large ribosomal subunit protein uL18 (122 aa).

The protein belongs to the universal ribosomal protein uL18 family. In terms of assembly, part of the 50S ribosomal subunit; part of the 5S rRNA/L5/L18/L25 subcomplex. Contacts the 5S and 23S rRNAs.

Functionally, this is one of the proteins that bind and probably mediate the attachment of the 5S RNA into the large ribosomal subunit, where it forms part of the central protuberance. The protein is Large ribosomal subunit protein uL18 of Acetivibrio thermocellus (strain ATCC 27405 / DSM 1237 / JCM 9322 / NBRC 103400 / NCIMB 10682 / NRRL B-4536 / VPI 7372) (Clostridium thermocellum).